The sequence spans 306 residues: Lipid A biosynthesis lauroyltransferase (306 aa).

The helical transmembrane segment at 17–37 (WLTWLGIGVLWLVVQLPYPVI) threads the bilayer. An HXXXXD motif motif is present at residues 132–137 (HFLTLE).

Belongs to the LpxL/LpxM/LpxP family. As to quaternary structure, monomer.

The protein localises to the cell inner membrane. It carries out the reaction dodecanoyl-[ACP] + alpha-Kdo-(2-&gt;4)-alpha-Kdo-(2-&gt;6)-lipid IVA (E. coli) = alpha-Kdo-(2-&gt;4)-alpha-Kdo-(2-&gt;6)-(dodecanoyl)-lipid IVA (E. coli) + holo-[ACP]. It participates in glycolipid biosynthesis; KDO(2)-lipid A biosynthesis; KDO(2)-lipid A from CMP-3-deoxy-D-manno-octulosonate and lipid IV(A): step 3/4. Its pathway is bacterial outer membrane biogenesis; lipopolysaccharide biosynthesis. Catalyzes the transfer of laurate from lauroyl-[acyl-carrier-protein] (ACP) to Kdo(2)-lipid IV(A) to form Kdo(2)-(lauroyl)-lipid IV(A). Has 10 fold selectivity for lauroyl-ACP over myristoyl-ACP. In vitro, can also catalyze a slow second acylation reaction leading to the formation of Kdo(2)-(dilauroyl)-lipid IV(A). In Escherichia coli (strain K12), this protein is Lipid A biosynthesis lauroyltransferase.